A 393-amino-acid polypeptide reads, in one-letter code: Phosphoenolpyruvate/phosphate translocator 3, chloroplastic (393 aa).

The transit peptide at 1-65 directs the protein to the chloroplast; the sequence is MQRAAAASRA…LSGGRAVTAR (65 aa). The next 7 membrane-spanning stretches (helical) occupy residues 89–109, 124–144, 164–183, 195–217, 232–249, 270–290, and 362–382; these read LAETAQLGAMIVAWYLLNIYF, YTITAFQLAFGSFVIFLMWAL, AAGHMLGTVFTNMSLSKVAV, FFTVLLSAFFLGETPSLLVLGSL, LSFNWIGFWSAMASNLLY, INLFSILTILSFLLSLPLMLF, and TPISPVNALGTGVALGGVFLY. An EamA domain is found at 123 to 228; the sequence is PYTITAFQLA…PIVGGVALAS (106 aa).

The protein belongs to the TPT transporter family. PPT (TC 2.A.7.9) subfamily.

Its subcellular location is the plastid. The protein localises to the chloroplast membrane. In terms of biological role, phosphoenolpyruvate/phosphate translocator that transports phosphoenolpyruvate (PEP) and dihydroxyacetone phosphate. The sequence is that of Phosphoenolpyruvate/phosphate translocator 3, chloroplastic (PPT3) from Oryza sativa subsp. japonica (Rice).